The following is a 275-amino-acid chain: Putative methylglyoxal reductase DkgA (275 aa).

The active-site Proton donor is the tyrosine 51. Position 107 (histidine 107) interacts with substrate. 187–241 (SPLAQGGEGVFDQKVIRELADKYGKTPAQIVIRWHLDCGLVVIPKSVTPSRIAEN) lines the NADP(+) pocket.

The protein belongs to the aldo/keto reductase family. In terms of assembly, monomer.

It is found in the cytoplasm. It carries out the reaction hydroxyacetone + NADP(+) = methylglyoxal + NADPH + H(+). Functionally, aldo-keto reductase that significantly contributes to cellular methylglyoxal detoxification by catalyzing the NADPH-dependent conversion of methylglyoxal to acetol. The chain is Putative methylglyoxal reductase DkgA from Salmonella typhi.